A 1013-amino-acid polypeptide reads, in one-letter code: Alpha-2-macroglobulin homolog (1013 aa).

The tract at residues 804-844 (AQRGANGERDGLRETVPVRPAGARQLLSGSGSVGADKAGGN) is disordered.

The protein belongs to the protease inhibitor I39 (alpha-2-macroglobulin) family. Bacterial alpha-2-macroglobulin subfamily.

This chain is Alpha-2-macroglobulin homolog, found in Deinococcus radiodurans (strain ATCC 13939 / DSM 20539 / JCM 16871 / CCUG 27074 / LMG 4051 / NBRC 15346 / NCIMB 9279 / VKM B-1422 / R1).